Here is a 255-residue protein sequence, read N- to C-terminus: Triosephosphate isomerase (255 aa).

9–11 (NWK) serves as a coordination point for substrate. Histidine 95 acts as the Electrophile in catalysis. The active-site Proton acceptor is the glutamate 167. Substrate contacts are provided by residues glycine 173, serine 212, and 233–234 (GG).

The protein belongs to the triosephosphate isomerase family. Homodimer.

The protein localises to the cytoplasm. The catalysed reaction is D-glyceraldehyde 3-phosphate = dihydroxyacetone phosphate. Its pathway is carbohydrate biosynthesis; gluconeogenesis. It participates in carbohydrate degradation; glycolysis; D-glyceraldehyde 3-phosphate from glycerone phosphate: step 1/1. In terms of biological role, involved in the gluconeogenesis. Catalyzes stereospecifically the conversion of dihydroxyacetone phosphate (DHAP) to D-glyceraldehyde-3-phosphate (G3P). The sequence is that of Triosephosphate isomerase from Yersinia pseudotuberculosis serotype O:1b (strain IP 31758).